Here is a 119-residue protein sequence, read N- to C-terminus: Protein GSKIP homolog (119 aa).

This sequence belongs to the GSKIP family.

In Drosophila melanogaster (Fruit fly), this protein is Protein GSKIP homolog.